Reading from the N-terminus, the 590-residue chain is uncharacterized protein (590 aa).

Positions 330-368 are disordered; that stretch reads IDKSESDIDDSESDIDSENDIDSESDIDDSETDDEEELE. Over residues 336–368 the composition is skewed to acidic residues; it reads DIDDSESDIDSENDIDSESDIDDSETDDEEELE.

It belongs to the mimivirus L5 family.

This is an uncharacterized protein from Acanthamoeba polyphaga mimivirus (APMV).